Reading from the N-terminus, the 519-residue chain is Ribonuclease Y (519 aa).

A helical membrane pass occupies residues 3-23 (PMTVLISILLTLLGLVVGYYV). Residues 209 to 272 (TVSVVNLPND…ETARIALDKL (64 aa)) enclose the KH domain. Residues 335–428 (VLKHSMEVAF…VAAADALSAA (94 aa)) enclose the HD domain.

It belongs to the RNase Y family.

It is found in the cell membrane. In terms of biological role, endoribonuclease that initiates mRNA decay. This Bacillus velezensis (strain DSM 23117 / BGSC 10A6 / LMG 26770 / FZB42) (Bacillus amyloliquefaciens subsp. plantarum) protein is Ribonuclease Y.